A 726-amino-acid polypeptide reads, in one-letter code: Sensory/regulatory protein RpfC (726 aa).

5 consecutive transmembrane segments (helical) span residues 23–40 (NLIR…LGWR), 52–72 (TWLI…AILL), 95–115 (IMAI…WVTI), 128–148 (AATA…PYWK), and 152–172 (YLSW…DSLL). The 223-residue stretch at 195–417 (NMSHEFRTPL…VFWFELPMAI (223 aa)) folds into the Histidine kinase domain. His198 is subject to Phosphohistidine; by autocatalysis. The region spanning 463–581 (RMLVADDHEA…KLLDTLADLA (119 aa)) is the Response regulatory domain. Asp512 bears the 4-aspartylphosphate mark. The HPt domain maps to 618–711 (GEEFERQFVR…KAGKDALDAR (94 aa)). A Phosphohistidine modification is found at His657.

At low DSF concentrations, interacts with RpfF. Autophosphorylated. Activation may require a sequential transfer of a phosphate group from a His in the primary transmitter domain, to an Asp in the receiver domain and to a His in the secondary transmitter domain.

Its subcellular location is the cell inner membrane. The enzyme catalyses ATP + protein L-histidine = ADP + protein N-phospho-L-histidine.. With respect to regulation, binding of DSF to the sensor region causes allosteric change, which facilitates RpfC autophosphorylation. Functionally, hybrid sensor kinase that regulates diverse biological functions through two distinct molecular mechanisms. At low cell density, the extracellular concentration of the diffusible signaling factor (DSF) is below a threshold, and unphosphorylated RpfC is involved in the negative regulation of DSF synthesis, via direct interaction with the DSF synthase RpfF. Interaction prevents synthesis of DSF, which remains at a basal level. This activity does not involve the phosphorelay mechanism and is not dependent on RpfG. Is also member of the two-component regulatory system RpfG/RpfC, which is involved in the perception and response to DSF, which is essential for cell-cell signaling. At high cell density, the level of extracellular DSF increases and binding of DSF to the sensor region of RpfC causes autophosphorylation of RpfC, which results in the release of RpfF and the activation of RpfG via a four-step phosphorelay. Activation of RpfG leads to the positive regulation of biofilm dispersal and the production of virulence factors. The chain is Sensory/regulatory protein RpfC (rpfC) from Xanthomonas campestris pv. campestris (strain ATCC 33913 / DSM 3586 / NCPPB 528 / LMG 568 / P 25).